The chain runs to 105 residues: MSAKIRSGDDVIVLTGRDRGKIGKVIKIVTCSAKRKAVVSGINVHKKHAKPKAGSSGGIINKELAIDISNIAILDPKYKAPTRVGFKVIDSKKVRFAKVSGEVIG.

This sequence belongs to the universal ribosomal protein uL24 family. As to quaternary structure, part of the 50S ribosomal subunit.

Functionally, one of two assembly initiator proteins, it binds directly to the 5'-end of the 23S rRNA, where it nucleates assembly of the 50S subunit. One of the proteins that surrounds the polypeptide exit tunnel on the outside of the subunit. This Wolbachia sp. subsp. Brugia malayi (strain TRS) protein is Large ribosomal subunit protein uL24.